Reading from the N-terminus, the 230-residue chain is Nucleoside diphosphate kinase 2, chloroplastic (230 aa).

The N-terminal 64 residues, 1–64, are a transit peptide targeting the chloroplast; sequence MEAMAVFSGS…SYPKTFRTRS (64 aa). ATP-binding residues include Lys-90, Phe-138, Arg-166, Thr-172, Arg-183, and Asn-193. His-196 acts as the Pros-phosphohistidine intermediate in catalysis.

Belongs to the NDK family. Mg(2+) is required as a cofactor.

The protein localises to the plastid. It localises to the chloroplast. The enzyme catalyses a 2'-deoxyribonucleoside 5'-diphosphate + ATP = a 2'-deoxyribonucleoside 5'-triphosphate + ADP. It catalyses the reaction a ribonucleoside 5'-diphosphate + ATP = a ribonucleoside 5'-triphosphate + ADP. Major role in the synthesis of nucleoside triphosphates other than ATP. The ATP gamma phosphate is transferred to the NDP beta phosphate via a ping-pong mechanism, using a phosphorylated active-site intermediate. The polypeptide is Nucleoside diphosphate kinase 2, chloroplastic (NDPK2) (Pisum sativum (Garden pea)).